Consider the following 209-residue polypeptide: 3-demethoxyubiquinol 3-hydroxylase (209 aa).

The Fe cation site is built by Glu58, Glu88, His91, Glu140, Glu172, and His175.

This sequence belongs to the COQ7 family. It depends on Fe cation as a cofactor.

It is found in the cell membrane. The enzyme catalyses a 5-methoxy-2-methyl-3-(all-trans-polyprenyl)benzene-1,4-diol + AH2 + O2 = a 3-demethylubiquinol + A + H2O. It functions in the pathway cofactor biosynthesis; ubiquinone biosynthesis. Its function is as follows. Catalyzes the hydroxylation of 2-nonaprenyl-3-methyl-6-methoxy-1,4-benzoquinol during ubiquinone biosynthesis. This is 3-demethoxyubiquinol 3-hydroxylase from Polynucleobacter asymbioticus (strain DSM 18221 / CIP 109841 / QLW-P1DMWA-1) (Polynucleobacter necessarius subsp. asymbioticus).